A 247-amino-acid chain; its full sequence is 2,3-bisphosphoglycerate-dependent phosphoglycerate mutase (247 aa).

Residues 13-20, 26-27, R65, 92-95, K103, 119-120, and 186-187 each bind substrate; these read RHGESDWN, TG, ERHY, RR, and GN. H14 serves as the catalytic Tele-phosphohistidine intermediate. The active-site Proton donor/acceptor is the E92.

This sequence belongs to the phosphoglycerate mutase family. BPG-dependent PGAM subfamily. As to quaternary structure, homotetramer, dimer of dimers.

It catalyses the reaction (2R)-2-phosphoglycerate = (2R)-3-phosphoglycerate. It functions in the pathway carbohydrate degradation; glycolysis; pyruvate from D-glyceraldehyde 3-phosphate: step 3/5. In terms of biological role, catalyzes the interconversion of 2-phosphoglycerate and 3-phosphoglycerate. The polypeptide is 2,3-bisphosphoglycerate-dependent phosphoglycerate mutase (Mycobacterium leprae (strain Br4923)).